A 388-amino-acid polypeptide reads, in one-letter code: (S)-8-oxocitronellyl enol synthase (388 aa).

Residues 38–40 (TGI), 66–67 (RR), 84–85 (DV), 108–109 (SW), and Gln142 each bind NADP(+). Catalysis depends on residues Lys146 and Tyr178. The substrate site is built by Lys146 and Tyr178. NADP(+) is bound by residues Tyr178, Val204, and 211–213 (SMM). Position 349 (Ser349) interacts with substrate.

Belongs to the short-chain dehydrogenases/reductases (SDR) family. Highly divergent. Homodimer. Expressed in internal phloem-associated parenchyma (IPAP) cells.

It is found in the cytoplasm. Its subcellular location is the cytosol. The catalysed reaction is (S)-8-oxocitronellyl enol + NADP(+) = (6E)-8-oxogeranial + NADPH + H(+). It carries out the reaction (S)-8-oxocitronellyl enol + NAD(+) = (6E)-8-oxogeranial + NADH + H(+). Functionally, iridoid synthase that catalyzes the first step in generation of the iridoid ring scaffold using the linear monoterpene (6E)-8-oxogeranial as substrate. Iridoids comprise a large family of distinctive bicyclic monoterpenes that possess a wide range of pharmacological activities, including anticancer, anti-inflammatory, antifungal and antibacterial activities. The sequence is that of (S)-8-oxocitronellyl enol synthase from Catharanthus roseus (Madagascar periwinkle).